Consider the following 488-residue polypeptide: Palmitoleoyl-protein carboxylesterase notum1 (488 aa).

A signal peptide spans 1–20 (MAGALCVTLLLLLSTNTVSG). The N-linked (GlcNAc...) asparagine glycan is linked to asparagine 90. Active-site charge relay system residues include serine 226, aspartate 334, and histidine 383.

Belongs to the pectinacetylesterase family. Notum subfamily. As to expression, expressed in the egg and through cleavage to gastrulation stages. Enriched in the animal (prospective ectoderm) and dorsal regions in early gastrula. Shows a dynamic expression during embryogenesis, in particular during neural induction and antero-posterior (AP) patterning.

The protein resides in the secreted. The enzyme catalyses [Wnt protein]-O-(9Z)-hexadecenoyl-L-serine + H2O = [Wnt protein]-L-serine + (9Z)-hexadecenoate + H(+). In terms of biological role, carboxylesterase that acts as a key negative regulator of the Wnt signaling pathway by specifically mediating depalmitoleoylation of WNT proteins. Serine palmitoleoylation of WNT proteins is required for efficient binding to frizzled receptors. Functions in the prospective ectoderm and is required for neural induction. This Xenopus laevis (African clawed frog) protein is Palmitoleoyl-protein carboxylesterase notum1.